The chain runs to 1032 residues: Protein transport protein Sec24D (1032 aa).

The disordered stretch occupies residues 1–260 (MSQQGYVATP…GPPQPQKKLD (260 aa)). The segment covering 102–133 (PSAQSSYPGPISTSSVTQLGSQLSAMQINSYG) has biased composition (polar residues). Positions 198-212 (GPPPPNAQYQPPPLP) are enriched in pro residues. Serine 266 carries the phosphoserine modification. 4 residues coordinate Zn(2+): cysteine 363, cysteine 366, cysteine 385, and cysteine 388. Positions 363–388 (CNRCKAYMCPFMQFIEGGRRYQCGFC) are zinc finger-like. The Gelsolin-like repeat unit spans residues 901–974 (MLPAAVRCSE…PYSQQLRMIM (74 aa)).

It belongs to the SEC23/SEC24 family. SEC24 subfamily. As to quaternary structure, COPII is composed of at least five proteins: the Sec23/24 complex, the Sec13/31 complex and Sar1. Interacts with TMED2 and TMED10. Interacts with CNIH4. Interacts with GOSR2 (via IxM motif) and STX5 (via IxM motif); recruits GOSR2 and STX5 into COPII-coated vesicles. Interacts with KCNA3; this interaction is reduced in the presence of KCNE4. In terms of tissue distribution, ubiquitously expressed, with higher amounts in placenta, pancreas, heart and liver.

It localises to the cytoplasmic vesicle. Its subcellular location is the COPII-coated vesicle membrane. The protein resides in the endoplasmic reticulum membrane. It is found in the cytoplasm. The protein localises to the cytosol. Functionally, component of the coat protein complex II (COPII) which promotes the formation of transport vesicles from the endoplasmic reticulum (ER). The coat has two main functions, the physical deformation of the endoplasmic reticulum membrane into vesicles and the selection of cargo molecules for their transport to the Golgi complex. Plays a central role in cargo selection within the COPII complex and together with SEC24C may have a different specificity compared to SEC24A and SEC24B. May more specifically package GPI-anchored proteins through the cargo receptor TMED10. May also be specific for IxM motif-containing cargos like the SNAREs GOSR2 and STX5. The sequence is that of Protein transport protein Sec24D from Homo sapiens (Human).